A 798-amino-acid chain; its full sequence is Integrin beta-1 (798 aa).

The N-terminal stretch at 1–20 (MNLQLIFWIGLISSVCCVFG) is a signal peptide. Topologically, residues 21 to 728 (QADEDRCLKA…ETPECPTGPD (708 aa)) are extracellular. One can recognise a PSI domain in the interval 26 to 76 (RCLKANAKSCGECIQAGPNCGWCTNSTFLQEGMPTSARCDDLEALKKKGCH). 28 disulfide bridges follow: Cys-27-Cys-45, Cys-35-Cys-464, Cys-38-Cys-64, Cys-48-Cys-75, Cys-207-Cys-213, Cys-261-Cys-301, Cys-401-Cys-415, Cys-435-Cys-462, Cys-466-Cys-486, Cys-477-Cys-489, Cys-491-Cys-500, Cys-502-Cys-533, Cys-516-Cys-531, Cys-525-Cys-536, Cys-538-Cys-553, Cys-555-Cys-576, Cys-560-Cys-574, Cys-568-Cys-579, Cys-581-Cys-590, Cys-592-Cys-615, Cys-599-Cys-613, Cys-607-Cys-618, Cys-620-Cys-630, Cys-633-Cys-636, Cys-640-Cys-691, Cys-646-Cys-665, Cys-649-Cys-661, and Cys-699-Cys-723. Residues 75–91 (CHPNDTENPRGSKDIKK) are compositionally biased toward basic and acidic residues. Residues 75-105 (CHPNDTENPRGSKDIKKNKNVTNRSKGTAEK) form a disordered region. Asn-94 and Asn-97 each carry an N-linked (GlcNAc...) asparagine glycan. Residues 140-378 (DYPIDLYYLM…QLIIDAYNSL (239 aa)) form the VWFA domain. Residues Ser-152 and Ser-154 each coordinate Mg(2+). The Ca(2+) site is built by Ser-154, Asp-157, Asp-158, and Glu-189. The tract at residues 207–213 (CTNEQNC) is CX3CL1-binding. Residue Asn-212 is glycosylated (N-linked (GlcNAc...) asparagine). Ca(2+) contacts are provided by Asn-244, Asp-246, Pro-248, and Glu-249. A Mg(2+)-binding site is contributed by Glu-249. Residue Asn-269 is glycosylated (N-linked (GlcNAc...) asparagine). Positions 295–314 (LPNDGQCHLKNDVYTMSHYY) are CX3CL1-binding. Ala-362 is a Ca(2+) binding site. The interaction with TMEM182 stretch occupies residues 383–465 (ILENSKLPEG…IILQFICECE (83 aa)). Residues Asn-406 and Asn-417 are each glycosylated (N-linked (GlcNAc...) asparagine). I-EGF domains follow at residues 466-501 (CQGEGIPGSPKCHDGNGTFECGACRCNEGRVGRHCE), 502-554 (CSTD…KFCE), 555-591 (CDNFNCDRSNGLICGGNGVCKCRVCECNPNYTGSACD), and 592-631 (CSLDTTSCMAVNGQICNGRGVCECGACKCTDPKFQGPTCE). N-linked (GlcNAc...) asparagine glycosylation is present at Asn-481. The N-linked (GlcNAc...) asparagine glycan is linked to Asn-520. Asn-584 is a glycosylation site (N-linked (GlcNAc...) asparagine). Residue Asn-669 is glycosylated (N-linked (GlcNAc...) asparagine). A helical transmembrane segment spans residues 729 to 749 (IIPIVAGVVAGIVLIGLALLL). Topologically, residues 750-798 (IWKLLMIIHDRREFAKFEKERMNAKWDTGENPIYKSAVTTVVNPKYEGK) are cytoplasmic. Residues 762–767 (EFAKFE) form a signal for sorting from recycling endosomes; interaction with ACAP1 region. Thr-777 is modified (phosphothreonine). Tyr-783 bears the Phosphotyrosine mark. Residue Ser-785 is modified to Phosphoserine. Positions 785–792 (SAVTTVVN) are interaction with ITGB1BP1. At Thr-789 the chain carries Phosphothreonine. An N6-acetyllysine; alternate modification is found at Lys-794. Residue Lys-794 forms a Glycyl lysine isopeptide (Lys-Gly) (interchain with G-Cter in SUMO1); alternate linkage.

This sequence belongs to the integrin beta chain family. In terms of assembly, interacts with seprase FAP (seprase); the interaction occurs at the cell surface of invadopodia membrane in a collagen-dependent manner. Heterodimer of an alpha and a beta subunit. Beta-1 associates with either alpha-1, alpha-2, alpha-3, alpha-4, alpha-5, alpha-6, alpha-7, alpha-8, alpha-9, alpha-10, alpha-11 or alpha-V. ITGA6:ITGB1 is found in a complex with CD9; interaction takes place in oocytes and is involved in sperm-egg fusion. Binds LGALS3BP and NMRK2, when associated with alpha-7, but not with alpha-5. Interacts with FLNA, FLNB, FLNC and RANBP9. Interacts with KRT1 in the presence of RACK1 and SRC. Interacts with JAML; integrin alpha-4/beta-1 may regulate leukocyte to endothelial cells adhesion by controlling JAML homodimerization. Interacts with RAB21. Interacts (via the cytoplasmic region) with RAB25 (via the hypervariable C-terminal region). Interacts with MYO10. Interacts with ITGB1BP1 (via C-terminal region); the interaction is a prerequisite for focal adhesion disassembly. Interacts with TLN1; the interaction is prevented by competitive binding of ITGB1BP1. Interacts with ACAP1; required for ITGB1 recycling. Interacts with ASAP3. Interacts with FERMT2; the interaction is inhibited in presence of ITGB1BP1. Interacts with DAB2. Interacts with FGR and HCK. Interacts with alpha-7A and alpha-7B in adult skeletal muscle. Interacts with alpha-7B in cardiomyocytes of adult heart. Interacts with EMP2; the interaction may be direct or indirect and ITGB1 has a heterodimer form. ITGA5:ITGB1 interacts with CCN3. ITGA4:ITGB1 is found in a ternary complex with CX3CR1 and CX3CL1. ITGA5:ITGB1 interacts with FBN1. ITGA5:ITGB1 acts as a receptor for fibronectin FN1 and mediates R-G-D-dependent cell adhesion to FN1. ITGA5:ITGB1 interacts with IL1B. Interacts with MDK. ITGA4:ITGB1 interacts with MDK; this interaction mediates MDK-induced osteoblast cells migration through PXN phosphorylation. ITGA6:ITGB1 interacts with MDK; this interaction mediates MDK-induced neurite-outgrowth. ITGA5:ITGB1 interacts with ACE2. Interacts with TMEM182 and LAMB1. Interacts with tensin TNS3; TNS3 also interacts with PEAK1, thus acting as an adapter molecule to bridge the association of PEAK1 with ITGB1. Interacts with tensin TNS4; the interaction displaces tensin TNS3 from the ITGB1 cytoplasmic tail and promotes ITGB1 stability. Integrin ITGA9:ITGB1 interacts with SPP1/OPN (via N-terminus). Integrin ITGA9:ITGB1 interacts with TNC/TNFN3 (via the 3rd Fibronectin type-III domain). Integrins ITGA4:ITGB1 and ITGA9:ITGB1 interact with SVEP1 (via Sushi domain 21); thereby inhibit Ca(2+) intracellular signaling and as a result repress vasocontraction. ITGA4:ITGB1 and ITGA5:ITGB1 interacts with SELP. Interacts with CD248. ITGA5:ITGB1 interacts with IGFBP1. ITGA4:ITGB1 interacts with BCAM. Interacts with ADGRG6.

The protein localises to the cell membrane. Its subcellular location is the cell projection. The protein resides in the invadopodium membrane. It localises to the ruffle membrane. It is found in the recycling endosome. The protein localises to the melanosome. Its subcellular location is the cell junction. The protein resides in the focal adhesion. It localises to the lamellipodium. It is found in the ruffle. Its function is as follows. Integrins alpha-1/beta-1, alpha-2/beta-1, alpha-10/beta-1 and alpha-11/beta-1 are receptors for collagen. Integrins alpha-1/beta-1 and alpha-2/beta-2 recognize the proline-hydroxylated sequence G-F-P-G-E-R in collagen. Integrins alpha-2/beta-1, alpha-3/beta-1, alpha-4/beta-1, alpha-5/beta-1, alpha-8/beta-1, alpha-10/beta-1, alpha-11/beta-1 and alpha-V/beta-1 are receptors for fibronectin. Alpha-4/beta-1 recognizes one or more domains within the alternatively spliced CS-1 and CS-5 regions of fibronectin. Integrin alpha-5/beta-1 is a receptor for fibrinogen. Integrin alpha-1/beta-1, alpha-2/beta-1, alpha-6/beta-1 and alpha-7/beta-1 are receptors for lamimin. Integrin alpha-6/beta-1 (ITGA6:ITGB1) is present in oocytes and is involved in sperm-egg fusion. Integrin alpha-4/beta-1 is a receptor for VCAM1 and recognizes the sequence Q-I-D-S in VCAM1. Integrin alpha-9/beta-1 is a receptor for VCAM1, cytotactin and osteopontin. It recognizes the sequence A-E-I-D-G-I-E-L in cytotactin. Integrin alpha-3/beta-1 is a receptor for epiligrin, thrombospondin and CSPG4. Integrin alpha-3/beta-1 provides a docking site for FAP (seprase) at invadopodia plasma membranes in a collagen-dependent manner and hence may participate in the adhesion, formation of invadopodia and matrix degradation processes, promoting cell invasion. Alpha-3/beta-1 may mediate with LGALS3 the stimulation by CSPG4 of endothelial cells migration. Integrin alpha-V/beta-1 is a receptor for vitronectin. Beta-1 integrins recognize the sequence R-G-D in a wide array of ligands. When associated with alpha-7/beta-1 integrin, regulates cell adhesion and laminin matrix deposition. Involved in promoting endothelial cell motility and angiogenesis. Involved in osteoblast compaction through the fibronectin fibrillogenesis cell-mediated matrix assembly process and the formation of mineralized bone nodules. May be involved in up-regulation of the activity of kinases such as PKC via binding to KRT1. Together with KRT1 and RACK1, serves as a platform for SRC activation or inactivation. Plays a mechanistic adhesive role during telophase, required for the successful completion of cytokinesis. ITGA4:ITGB1 binds to fractalkine (CX3CL1) and may act as its coreceptor in CX3CR1-dependent fractalkine signaling. ITGA4:ITGB1 and ITGA5:ITGB1 bind to PLA2G2A via a site (site 2) which is distinct from the classical ligand-binding site (site 1) and this induces integrin conformational changes and enhanced ligand binding to site 1. ITGA5:ITGB1 acts as a receptor for fibrillin-1 (FBN1) and mediates R-G-D-dependent cell adhesion to FBN1. ITGA5:ITGB1 is a receptor for IL1B and binding is essential for IL1B signaling. ITGA5:ITGB3 is a receptor for soluble CD40LG and is required for CD40/CD40LG signaling. Plays an important role in myoblast differentiation and fusion during skeletal myogenesis. ITGA9:ITGB1 may play a crucial role in SVEP1/polydom-mediated myoblast cell adhesion. Integrins ITGA9:ITGB1 and ITGA4:ITGB1 repress PRKCA-mediated L-type voltage-gated channel Ca(2+) influx and ROCK-mediated calcium sensitivity in vascular smooth muscle cells via their interaction with SVEP1, thereby inhibit vasocontraction. The polypeptide is Integrin beta-1 (Camelus bactrianus (Bactrian camel)).